Reading from the N-terminus, the 208-residue chain is ATP-dependent Clp protease proteolytic subunit (208 aa).

S111 acts as the Nucleophile in catalysis. The active site involves H136.

It belongs to the peptidase S14 family. As to quaternary structure, fourteen ClpP subunits assemble into 2 heptameric rings which stack back to back to give a disk-like structure with a central cavity, resembling the structure of eukaryotic proteasomes.

The protein localises to the cytoplasm. It catalyses the reaction Hydrolysis of proteins to small peptides in the presence of ATP and magnesium. alpha-casein is the usual test substrate. In the absence of ATP, only oligopeptides shorter than five residues are hydrolyzed (such as succinyl-Leu-Tyr-|-NHMec, and Leu-Tyr-Leu-|-Tyr-Trp, in which cleavage of the -Tyr-|-Leu- and -Tyr-|-Trp bonds also occurs).. Its function is as follows. Cleaves peptides in various proteins in a process that requires ATP hydrolysis. Has a chymotrypsin-like activity. Plays a major role in the degradation of misfolded proteins. The protein is ATP-dependent Clp protease proteolytic subunit of Vibrio campbellii (strain ATCC BAA-1116).